The sequence spans 378 residues: 3-dehydroquinate synthase (378 aa).

Residues 115–119, 139–140, lysine 152, and lysine 161 contribute to the NAD(+) site; these read GVVGD and TS. Residues glutamate 194, histidine 256, and histidine 275 each contribute to the Zn(2+) site.

It belongs to the sugar phosphate cyclases superfamily. Dehydroquinate synthase family. It depends on Co(2+) as a cofactor. Zn(2+) is required as a cofactor. NAD(+) serves as cofactor.

It is found in the cytoplasm. The catalysed reaction is 7-phospho-2-dehydro-3-deoxy-D-arabino-heptonate = 3-dehydroquinate + phosphate. It functions in the pathway metabolic intermediate biosynthesis; chorismate biosynthesis; chorismate from D-erythrose 4-phosphate and phosphoenolpyruvate: step 2/7. Its function is as follows. Catalyzes the conversion of 3-deoxy-D-arabino-heptulosonate 7-phosphate (DAHP) to dehydroquinate (DHQ). The protein is 3-dehydroquinate synthase of Brucella suis (strain ATCC 23445 / NCTC 10510).